The following is a 588-amino-acid chain: DNA ligase (588 aa).

Glu-248 is a binding site for ATP. Lys-250 (N6-AMP-lysine intermediate) is an active-site residue. Arg-255, Arg-270, Glu-300, Phe-341, Arg-418, and Lys-424 together coordinate ATP.

Belongs to the ATP-dependent DNA ligase family. It depends on Mg(2+) as a cofactor.

It carries out the reaction ATP + (deoxyribonucleotide)n-3'-hydroxyl + 5'-phospho-(deoxyribonucleotide)m = (deoxyribonucleotide)n+m + AMP + diphosphate.. Its function is as follows. DNA ligase that seals nicks in double-stranded DNA during DNA replication, DNA recombination and DNA repair. The protein is DNA ligase of Thermoplasma volcanium (strain ATCC 51530 / DSM 4299 / JCM 9571 / NBRC 15438 / GSS1).